We begin with the raw amino-acid sequence, 120 residues long: Small ribosomal subunit protein uS13 (120 aa).

A disordered region spans residues 93-120 (RRGLPCRGQKTKTNARTRKGKRKTVGAA).

The protein belongs to the universal ribosomal protein uS13 family. As to quaternary structure, part of the 30S ribosomal subunit. Forms a loose heterodimer with protein S19. Forms two bridges to the 50S subunit in the 70S ribosome.

Located at the top of the head of the 30S subunit, it contacts several helices of the 16S rRNA. In the 70S ribosome it contacts the 23S rRNA (bridge B1a) and protein L5 of the 50S subunit (bridge B1b), connecting the 2 subunits; these bridges are implicated in subunit movement. Contacts the tRNAs in the A and P-sites. This chain is Small ribosomal subunit protein uS13, found in Sulfurimonas denitrificans (strain ATCC 33889 / DSM 1251) (Thiomicrospira denitrificans (strain ATCC 33889 / DSM 1251)).